Consider the following 63-residue polypeptide: Large ribosomal subunit protein bL35 (63 aa).

Positions 1 to 43 (MKMRTHSGAKKRLKVLSSGKVKKKSTRMRHLNSHMSSKTKRQL) are enriched in basic residues. The interval 1-45 (MKMRTHSGAKKRLKVLSSGKVKKKSTRMRHLNSHMSSKTKRQLGK) is disordered.

This sequence belongs to the bacterial ribosomal protein bL35 family.

This Bdellovibrio bacteriovorus (strain ATCC 15356 / DSM 50701 / NCIMB 9529 / HD100) protein is Large ribosomal subunit protein bL35.